Consider the following 425-residue polypeptide: Synaptotagmin-4 (425 aa).

The Vesicular portion of the chain corresponds to 1 to 16 (MAPITTSRVEFDEIPT). A helical transmembrane segment spans residues 17-37 (VVGIFSAFGLVFTVSLFAWIC). Topologically, residues 38–425 (CQRRSAKSNK…IAKWHMLCDG (388 aa)) are cytoplasmic. The tract at residues 127–147 (TETEKEANSPESLKSSTSLTS) is disordered. Position 135 is a phosphoserine; by MAPK8 (Ser135). The span at 137–146 (ESLKSSTSLT) shows a compositional bias: low complexity. C2 domains lie at 153-274 (KLGT…MLMT) and 287-420 (GRGE…AKWH). Asp246, Ser249, and Asp252 together coordinate Ca(2+).

Belongs to the synaptotagmin family. As to quaternary structure, interacts with KIF1A; the interaction increases in presence of calcium and decreases when SYT4 is phosphorylated at Ser-135. It depends on Ca(2+) as a cofactor. Post-translationally, phosphorylation at Ser-135 by MAPK8/JNK1 reduces interaction with KIF1A and neuronal dense core vesicles mobility. Expressed in many regions of the nervous system but is undetectable in extra neural tissues.

The protein resides in the cytoplasmic vesicle. It localises to the secretory vesicle. The protein localises to the neuronal dense core vesicle membrane. Synaptotagmin family member which does not bind Ca(2+). Plays a role in dendrite formation by melanocytes. Its function is as follows. Synaptotagmin family member which does not bind Ca(2+). Involved in neuronal dense core vesicles (DCVs) mobility through its interaction with KIF1A. Upon increased neuronal activity, phosphorylation by MAPK8/JNK1 destabilizes the interaction with KIF1A and captures DCVs to synapses. Plays a role in dendrite formation by melanocytes. The chain is Synaptotagmin-4 (Syt4) from Mus musculus (Mouse).